A 484-amino-acid chain; its full sequence is UDP-N-acetylmuramoyl-L-alanyl-D-glutamate--2,6-diaminopimelate ligase (484 aa).

A UDP-N-acetyl-alpha-D-muramoyl-L-alanyl-D-glutamate-binding site is contributed by Ser-30. Residue Gly-111 to Thr-117 participates in ATP binding. Residues Thr-153 to Thr-154, Ser-180, Gln-186, and Arg-188 contribute to the UDP-N-acetyl-alpha-D-muramoyl-L-alanyl-D-glutamate site. Lys-220 is modified (N6-carboxylysine). Residues Arg-378, Asp-402–Arg-405, Gly-455, and Glu-459 each bind meso-2,6-diaminopimelate. The short motif at Asp-402 to Arg-405 is the Meso-diaminopimelate recognition motif element.

It belongs to the MurCDEF family. MurE subfamily. Mg(2+) serves as cofactor. Carboxylation is probably crucial for Mg(2+) binding and, consequently, for the gamma-phosphate positioning of ATP.

The protein localises to the cytoplasm. The catalysed reaction is UDP-N-acetyl-alpha-D-muramoyl-L-alanyl-D-glutamate + meso-2,6-diaminopimelate + ATP = UDP-N-acetyl-alpha-D-muramoyl-L-alanyl-gamma-D-glutamyl-meso-2,6-diaminopimelate + ADP + phosphate + H(+). Its pathway is cell wall biogenesis; peptidoglycan biosynthesis. Its function is as follows. Catalyzes the addition of meso-diaminopimelic acid to the nucleotide precursor UDP-N-acetylmuramoyl-L-alanyl-D-glutamate (UMAG) in the biosynthesis of bacterial cell-wall peptidoglycan. This is UDP-N-acetylmuramoyl-L-alanyl-D-glutamate--2,6-diaminopimelate ligase from Phocaeicola vulgatus (strain ATCC 8482 / DSM 1447 / JCM 5826 / CCUG 4940 / NBRC 14291 / NCTC 11154) (Bacteroides vulgatus).